Reading from the N-terminus, the 305-residue chain is Oxidoreductase OpS7 (305 aa).

It belongs to the oxidoreductase OpS7 family.

It functions in the pathway secondary metabolite biosynthesis. Its function is as follows. Oxidoreductase; part of the gene cluster that mediates the biosynthesis of the bibenzoquinone oosporein, a metabolite required for fungal virulence that acts by evading host immunity to facilitate fungal multiplication in insects. The non-reducing polyketide synthase OpS1 produces orsellinic acid by condensing acetyl-CoA with 3 malonyl-CoA units. Orsellinic acid is then hydroxylated to benzenetriol by the hydroxylase OpS4. The intermediate is oxidized either nonenzymatically to 5,5'-dideoxy-oosporein or enzymatically to benzenetetrol by the oxidoreductase OpS7. The latter is further dimerized to oosporein by the catalase OpS5. OpS6 probably functions en route for protecting cells against oxidative stress by scavenging any leaked free radical form of benzenetetrol by activating the thiol group of glutathione. The sequence is that of Oxidoreductase OpS7 from Beauveria bassiana (strain ARSEF 2860) (White muscardine disease fungus).